The primary structure comprises 287 residues: ATP synthase gamma chain (287 aa).

Belongs to the ATPase gamma chain family. F-type ATPases have 2 components, CF(1) - the catalytic core - and CF(0) - the membrane proton channel. CF(1) has five subunits: alpha(3), beta(3), gamma(1), delta(1), epsilon(1). CF(0) has three main subunits: a, b and c.

Its subcellular location is the cell membrane. Functionally, produces ATP from ADP in the presence of a proton gradient across the membrane. The gamma chain is believed to be important in regulating ATPase activity and the flow of protons through the CF(0) complex. The protein is ATP synthase gamma chain of Brevibacillus brevis (strain 47 / JCM 6285 / NBRC 100599).